An 864-amino-acid chain; its full sequence is Valine--tRNA ligase (864 aa).

Residues Pro42–His52 carry the 'HIGH' region motif. The 'KMSKS' region signature appears at Lys589–Ser593. Lys592 is a binding site for ATP.

It belongs to the class-I aminoacyl-tRNA synthetase family. ValS type 2 subfamily. In terms of assembly, monomer.

It localises to the cytoplasm. It catalyses the reaction tRNA(Val) + L-valine + ATP = L-valyl-tRNA(Val) + AMP + diphosphate. Catalyzes the attachment of valine to tRNA(Val). As ValRS can inadvertently accommodate and process structurally similar amino acids such as threonine, to avoid such errors, it has a 'posttransfer' editing activity that hydrolyzes mischarged Thr-tRNA(Val) in a tRNA-dependent manner. The sequence is that of Valine--tRNA ligase from Wolbachia pipientis wMel.